Here is a 220-residue protein sequence, read N- to C-terminus: FMN-dependent NADH:quinone oxidoreductase 1 (220 aa).

18 to 20 (SVS) is an FMN binding site.

The protein belongs to the azoreductase type 1 family. As to quaternary structure, homodimer. FMN is required as a cofactor.

The catalysed reaction is 2 a quinone + NADH + H(+) = 2 a 1,4-benzosemiquinone + NAD(+). It catalyses the reaction N,N-dimethyl-1,4-phenylenediamine + anthranilate + 2 NAD(+) = 2-(4-dimethylaminophenyl)diazenylbenzoate + 2 NADH + 2 H(+). Functionally, quinone reductase that provides resistance to thiol-specific stress caused by electrophilic quinones. Its function is as follows. Also exhibits azoreductase activity. Catalyzes the reductive cleavage of the azo bond in aromatic azo compounds to the corresponding amines. This is FMN-dependent NADH:quinone oxidoreductase 1 from Bacillus anthracis.